A 240-amino-acid polypeptide reads, in one-letter code: Uridylate kinase (240 aa).

K12 to G15 contributes to the ATP binding site. The tract at residues G20–G25 is involved in allosteric activation by GTP. G54 is a binding site for UMP. Residues G55 and R59 each contribute to the ATP site. Residues D74 and T135 to T142 each bind UMP. Positions 163, 169, and 172 each coordinate ATP.

This sequence belongs to the UMP kinase family. As to quaternary structure, homohexamer.

It is found in the cytoplasm. It carries out the reaction UMP + ATP = UDP + ADP. Its pathway is pyrimidine metabolism; CTP biosynthesis via de novo pathway; UDP from UMP (UMPK route): step 1/1. Its activity is regulated as follows. Allosterically activated by GTP. Inhibited by UTP. Catalyzes the reversible phosphorylation of UMP to UDP. This is Uridylate kinase from Levilactobacillus brevis (strain ATCC 367 / BCRC 12310 / CIP 105137 / JCM 1170 / LMG 11437 / NCIMB 947 / NCTC 947) (Lactobacillus brevis).